Here is a 123-residue protein sequence, read N- to C-terminus: MPTNNQLVRCGRKSKIRASKSPALNGNPFAKGVCVLVKTITPRKPNSALRKMARVRFRNGTCVNAYIPGEGHNLQEHSTVLVRGGRVPDLPGVRYHIVRGVYDTQGVKNRKQGRSRYGAKRPK.

Position 89 is a 3-methylthioaspartic acid (aspartate 89).

The protein belongs to the universal ribosomal protein uS12 family. Part of the 30S ribosomal subunit. Contacts proteins S8 and S17. May interact with IF1 in the 30S initiation complex.

Functionally, with S4 and S5 plays an important role in translational accuracy. In terms of biological role, interacts with and stabilizes bases of the 16S rRNA that are involved in tRNA selection in the A site and with the mRNA backbone. Located at the interface of the 30S and 50S subunits, it traverses the body of the 30S subunit contacting proteins on the other side and probably holding the rRNA structure together. The combined cluster of proteins S8, S12 and S17 appears to hold together the shoulder and platform of the 30S subunit. The sequence is that of Small ribosomal subunit protein uS12 from Orientia tsutsugamushi (strain Ikeda) (Rickettsia tsutsugamushi).